A 186-amino-acid polypeptide reads, in one-letter code: Holliday junction branch migration complex subunit RuvA (186 aa).

The domain I stretch occupies residues 1-63; the sequence is MNDYINGFLY…DNHFKYYGFF (63 aa). The tract at residues 64-137 is domain II; sequence NQLVRDLFEI…QKELFNNKIS (74 aa). Position 137 (S137) is a region of interest, flexible linker. The segment at 137 to 186 is domain III; that stretch reads SEKKNKVITSLEKLGYKTKDIYKIIINVDEDLTIDELTKYVLEKLSYINN.

Belongs to the RuvA family. In terms of assembly, homotetramer. Forms an RuvA(8)-RuvB(12)-Holliday junction (HJ) complex. HJ DNA is sandwiched between 2 RuvA tetramers; dsDNA enters through RuvA and exits via RuvB. An RuvB hexamer assembles on each DNA strand where it exits the tetramer. Each RuvB hexamer is contacted by two RuvA subunits (via domain III) on 2 adjacent RuvB subunits; this complex drives branch migration. In the full resolvosome a probable DNA-RuvA(4)-RuvB(12)-RuvC(2) complex forms which resolves the HJ.

Its subcellular location is the cytoplasm. In terms of biological role, the RuvA-RuvB-RuvC complex processes Holliday junction (HJ) DNA during genetic recombination and DNA repair, while the RuvA-RuvB complex plays an important role in the rescue of blocked DNA replication forks via replication fork reversal (RFR). RuvA specifically binds to HJ cruciform DNA, conferring on it an open structure. The RuvB hexamer acts as an ATP-dependent pump, pulling dsDNA into and through the RuvAB complex. HJ branch migration allows RuvC to scan DNA until it finds its consensus sequence, where it cleaves and resolves the cruciform DNA. The sequence is that of Holliday junction branch migration complex subunit RuvA from Mycoplasma capricolum subsp. capricolum (strain California kid / ATCC 27343 / NCTC 10154).